The chain runs to 598 residues: Aspartate--tRNA ligase (598 aa).

Glutamate 182 contacts L-aspartate. Positions 206-209 (QLFK) are aspartate. Arginine 228 serves as a coordination point for L-aspartate. Residues 228-230 (RDE) and glutamine 237 contribute to the ATP site. Histidine 456 serves as a coordination point for L-aspartate. Glutamate 490 is an ATP binding site. Arginine 497 contacts L-aspartate. ATP is bound at residue 542–545 (GVDR).

The protein belongs to the class-II aminoacyl-tRNA synthetase family. Type 1 subfamily. As to quaternary structure, homodimer.

The protein localises to the cytoplasm. The catalysed reaction is tRNA(Asp) + L-aspartate + ATP = L-aspartyl-tRNA(Asp) + AMP + diphosphate. In terms of biological role, catalyzes the attachment of L-aspartate to tRNA(Asp) in a two-step reaction: L-aspartate is first activated by ATP to form Asp-AMP and then transferred to the acceptor end of tRNA(Asp). This is Aspartate--tRNA ligase from Agathobacter rectalis (strain ATCC 33656 / DSM 3377 / JCM 17463 / KCTC 5835 / VPI 0990) (Eubacterium rectale).